The following is a 313-amino-acid chain: Protein FixB (313 aa).

255 to 283 serves as a coordination point for FAD; that stretch reads LYLAVGISGQIQHMVGANASQTIFAINKD.

The protein belongs to the ETF alpha-subunit/FixB family. As to quaternary structure, heterodimer of FixA and FixB.

The protein operates within amine and polyamine metabolism; carnitine metabolism. Required for anaerobic carnitine reduction. May bring reductant to CaiA. This chain is Protein FixB, found in Escherichia coli O17:K52:H18 (strain UMN026 / ExPEC).